Here is a 242-residue protein sequence, read N- to C-terminus: Ribonuclease 3 (242 aa).

Residues 18–146 (APAIEAKLGY…IIGAIYLDGG (129 aa)) enclose the RNase III domain. Residue Glu59 coordinates Mg(2+). Asp63 is a catalytic residue. Mg(2+) is bound by residues Asp132 and Glu135. Residue Glu135 is part of the active site. The DRBM domain occupies 172-241 (NWKALLQDYC…AADALSRVEL (70 aa)). Positions 218–227 (RGKGTSKKEA) are enriched in basic and acidic residues. The interval 218-242 (RGKGTSKKEAQQAAAADALSRVELP) is disordered.

The protein belongs to the ribonuclease III family. As to quaternary structure, homodimer. The cofactor is Mg(2+).

It is found in the cytoplasm. The enzyme catalyses Endonucleolytic cleavage to 5'-phosphomonoester.. In terms of biological role, digests double-stranded RNA. Involved in the processing of primary rRNA transcript to yield the immediate precursors to the large and small rRNAs (23S and 16S). Processes some mRNAs, and tRNAs when they are encoded in the rRNA operon. Processes pre-crRNA and tracrRNA of type II CRISPR loci if present in the organism. The sequence is that of Ribonuclease 3 from Protochlamydia amoebophila (strain UWE25).